Consider the following 277-residue polypeptide: Ribonuclease HII (277 aa).

An RNase H type-2 domain is found at 20 to 250 (KLIIGLDEAG…SKKLLKKIED (231 aa)). Positions 26, 27, and 141 each coordinate a divalent metal cation.

The protein belongs to the RNase HII family. Mn(2+) is required as a cofactor. The cofactor is Mg(2+).

It is found in the cytoplasm. It catalyses the reaction Endonucleolytic cleavage to 5'-phosphomonoester.. Its function is as follows. Endonuclease that specifically degrades the RNA of RNA-DNA hybrids. The chain is Ribonuclease HII from Methanococcus aeolicus (strain ATCC BAA-1280 / DSM 17508 / OCM 812 / Nankai-3).